The primary structure comprises 204 residues: LexA repressor (204 aa).

A DNA-binding region (H-T-H motif) is located at residues 28-48 (RAEIAQELGFKSPNAAEEHLK). Catalysis depends on for autocatalytic cleavage activity residues serine 125 and lysine 162.

This sequence belongs to the peptidase S24 family. In terms of assembly, homodimer.

It carries out the reaction Hydrolysis of Ala-|-Gly bond in repressor LexA.. In terms of biological role, represses a number of genes involved in the response to DNA damage (SOS response), including recA and lexA. In the presence of single-stranded DNA, RecA interacts with LexA causing an autocatalytic cleavage which disrupts the DNA-binding part of LexA, leading to derepression of the SOS regulon and eventually DNA repair. The chain is LexA repressor from Ectopseudomonas mendocina (strain ymp) (Pseudomonas mendocina).